The sequence spans 493 residues: Glycerol kinase (493 aa).

Threonine 12 lines the ADP pocket. ATP contacts are provided by threonine 12, threonine 13, and serine 14. Sn-glycerol 3-phosphate is bound at residue threonine 12. Arginine 16 is an ADP binding site. The sn-glycerol 3-phosphate site is built by arginine 82, glutamate 83, tyrosine 132, and aspartate 239. Residues arginine 82, glutamate 83, tyrosine 132, aspartate 239, and glutamine 240 each contribute to the glycerol site. Threonine 261 and glycine 303 together coordinate ADP. Threonine 261, glycine 303, glutamine 307, and glycine 402 together coordinate ATP. The ADP site is built by glycine 402 and asparagine 406.

Belongs to the FGGY kinase family.

It catalyses the reaction glycerol + ATP = sn-glycerol 3-phosphate + ADP + H(+). It functions in the pathway polyol metabolism; glycerol degradation via glycerol kinase pathway; sn-glycerol 3-phosphate from glycerol: step 1/1. In terms of biological role, key enzyme in the regulation of glycerol uptake and metabolism. Catalyzes the phosphorylation of glycerol to yield sn-glycerol 3-phosphate. The chain is Glycerol kinase from Thermococcus onnurineus (strain NA1).